The sequence spans 70 residues: MATFSLGKHPHVELCDLLKLEGWSESGAQAKIAIAEGQVKVDGAVETRKRCKIVAGQTVSFAGHSVQVVA.

The S4 RNA-binding domain maps to Val-12–Val-68.

In pull-down experiments interacts with CedA.

Its structure and the presence of conserved basic residues indicates that it probably binds RNA. The protein is Putative RNA-binding protein YbcJ (ybcJ) of Escherichia coli (strain K12).